A 297-amino-acid polypeptide reads, in one-letter code: Coatomer subunit epsilon-2 (297 aa).

The protein belongs to the COPE family. In terms of assembly, oligomeric complex that consists of at least the alpha, beta, beta', gamma, delta, epsilon and zeta subunits.

The protein localises to the cytoplasm. The protein resides in the golgi apparatus membrane. Its subcellular location is the cytoplasmic vesicle. It is found in the COPI-coated vesicle membrane. The coatomer is a cytosolic protein complex that binds to dilysine motifs and reversibly associates with Golgi non-clathrin-coated vesicles, which further mediate biosynthetic protein transport from the ER, via the Golgi up to the trans Golgi network. The coatomer complex is required for budding from Golgi membranes, and is essential for the retrograde Golgi-to-ER transport of dilysine-tagged proteins. This Oryza sativa subsp. japonica (Rice) protein is Coatomer subunit epsilon-2.